The primary structure comprises 199 residues: Ribonuclease HII (199 aa).

Residues 1-199 enclose the RNase H type-2 domain; sequence MCVCGIDEAG…TYKNLVQGHI (199 aa). The a divalent metal cation site is built by aspartate 7, glutamate 8, and aspartate 97.

Belongs to the RNase HII family. The cofactor is Mn(2+). Requires Mg(2+) as cofactor.

The protein resides in the cytoplasm. The catalysed reaction is Endonucleolytic cleavage to 5'-phosphomonoester.. Its function is as follows. Endonuclease that specifically degrades the RNA of RNA-DNA hybrids. The sequence is that of Ribonuclease HII from Picrophilus torridus (strain ATCC 700027 / DSM 9790 / JCM 10055 / NBRC 100828 / KAW 2/3).